We begin with the raw amino-acid sequence, 493 residues long: Ketol-acid reductoisomerase (NADP(+)) (493 aa).

In terms of domain architecture, KARI N-terminal Rossmann spans 14–208 (LDQLGRCRFM…GGHRAGVLES (195 aa)). Residues 45–48 (CGAQ), arginine 68, arginine 76, serine 78, and 108–110 (DKQ) contribute to the NADP(+) site. The active site involves histidine 132. An NADP(+)-binding site is contributed by glycine 158. KARI C-terminal knotted domains lie at 209 to 345 (SFVA…APKG) and 346 to 486 (ENIK…MTDM). Positions 217, 221, 390, and 394 each coordinate Mg(2+). Serine 415 provides a ligand contact to substrate.

Belongs to the ketol-acid reductoisomerase family. Mg(2+) serves as cofactor.

The enzyme catalyses (2R)-2,3-dihydroxy-3-methylbutanoate + NADP(+) = (2S)-2-acetolactate + NADPH + H(+). It catalyses the reaction (2R,3R)-2,3-dihydroxy-3-methylpentanoate + NADP(+) = (S)-2-ethyl-2-hydroxy-3-oxobutanoate + NADPH + H(+). The protein operates within amino-acid biosynthesis; L-isoleucine biosynthesis; L-isoleucine from 2-oxobutanoate: step 2/4. Its pathway is amino-acid biosynthesis; L-valine biosynthesis; L-valine from pyruvate: step 2/4. Its function is as follows. Involved in the biosynthesis of branched-chain amino acids (BCAA). Catalyzes an alkyl-migration followed by a ketol-acid reduction of (S)-2-acetolactate (S2AL) to yield (R)-2,3-dihydroxy-isovalerate. In the isomerase reaction, S2AL is rearranged via a Mg-dependent methyl migration to produce 3-hydroxy-3-methyl-2-ketobutyrate (HMKB). In the reductase reaction, this 2-ketoacid undergoes a metal-dependent reduction by NADPH to yield (R)-2,3-dihydroxy-isovalerate. The sequence is that of Ketol-acid reductoisomerase (NADP(+)) from Histophilus somni (strain 2336) (Haemophilus somnus).